The sequence spans 579 residues: YTH domain-containing family protein 2 (579 aa).

The disordered stretch occupies residues Met-1 to Asn-45. Ser-2 bears the N-acetylserine mark. Phosphoserine occurs at positions 2, 4, 5, 22, 39, and 196. The segment at Ser-2 to Glu-384 is localization to mRNA processing bodies (P-bodies). The segment at Ala-247–Pro-387 is disordered. The span at Ala-291 to Pro-316 shows a compositional bias: polar residues. Low complexity predominate over residues Ala-337–Thr-349. Ser-359 is subject to Phosphoserine. Gly residues predominate over residues Ser-359–Val-371. The segment covering Gly-372 to Ser-383 has biased composition (polar residues). The tract at residues Pro-385–Lys-579 is interaction with m6A-containing mRNAs. Ser-394 carries the post-translational modification Phosphoserine. The 135-residue stretch at Gly-410–Ile-544 folds into the YTH domain. RNA contacts are provided by residues Lys-416–Tyr-418, Asp-422, Trp-432–Cys-433, Asn-462, Trp-486, and Trp-491.

Belongs to the YTHDF family. YTHDF2 subfamily. Interacts with CNOT1; interaction is direct and promotes recruitment of the CCR4-NOT complex. Interacts with YTHDF3. Interacts with RIDA/HRSP12; interaction leads to recruitment of the ribonuclease P/MRP complex. Post-translationally, ubiquitinated by the SCF(SKP2) complex, leading to its degradation. As to expression, widely expressed, with highest expression in testis.

Its subcellular location is the cytoplasm. The protein resides in the cytosol. It is found in the P-body. It localises to the stress granule. The protein localises to the nucleus. In terms of biological role, specifically recognizes and binds N6-methyladenosine (m6A)-containing RNAs, and regulates their stability. M6A is a modification present at internal sites of mRNAs and some non-coding RNAs and plays a role in mRNA stability and processing. Acts as a regulator of mRNA stability by promoting degradation of m6A-containing mRNAs via interaction with the CCR4-NOT and ribonuclease P/MRP complexes, depending on the context. The YTHDF paralogs (YTHDF1, YTHDF2 and YTHDF3) share m6A-containing mRNAs targets and act redundantly to mediate mRNA degradation and cellular differentiation. M6A-containing mRNAs containing a binding site for RIDA/HRSP12 (5'-GGUUC-3') are preferentially degraded by endoribonucleolytic cleavage: cooperative binding of RIDA/HRSP12 and YTHDF2 to transcripts leads to recruitment of the ribonuclease P/MRP complex. Other m6A-containing mRNAs undergo deadenylation via direct interaction between YTHDF2 and CNOT1, leading to recruitment of the CCR4-NOT and subsequent deadenylation of m6A-containing mRNAs. Required maternally to regulate oocyte maturation: probably acts by binding to m6A-containing mRNAs, thereby regulating maternal transcript dosage during oocyte maturation, which is essential for the competence of oocytes to sustain early zygotic development. Also required during spermatogenesis: regulates spermagonial adhesion by promoting degradation of m6A-containing transcripts coding for matrix metallopeptidases. Also involved in hematopoietic stem cells specification by binding to m6A-containing mRNAs, leading to promote their degradation. Also acts as a regulator of neural development by promoting m6A-dependent degradation of neural development-related mRNA targets. Inhibits neural specification of induced pluripotent stem cells by binding to methylated neural-specific mRNAs and promoting their degradation, thereby restraining neural differentiation. Regulates circadian regulation of hepatic lipid metabolism: acts by promoting m6A-dependent degradation of PPARA transcripts. Regulates the innate immune response to infection by inhibiting the type I interferon response: acts by binding to m6A-containing IFNB transcripts and promoting their degradation. May also act as a promoter of cap-independent mRNA translation following heat shock stress: upon stress, relocalizes to the nucleus and specifically binds mRNAs with some m6A methylation mark at their 5'-UTR, protecting demethylation of mRNAs by FTO, thereby promoting cap-independent mRNA translation. Regulates mitotic entry by promoting the phase-specific m6A-dependent degradation of WEE1 transcripts. Promotes formation of phase-separated membraneless compartments, such as P-bodies or stress granules, by undergoing liquid-liquid phase separation upon binding to mRNAs containing multiple m6A-modified residues: polymethylated mRNAs act as a multivalent scaffold for the binding of YTHDF proteins, juxtaposing their disordered regions and thereby leading to phase separation. The resulting mRNA-YTHDF complexes then partition into different endogenous phase-separated membraneless compartments, such as P-bodies, stress granules or neuronal RNA granules. May also recognize and bind RNAs modified by C5-methylcytosine (m5C) and act as a regulator of rRNA processing. The chain is YTH domain-containing family protein 2 from Mus musculus (Mouse).